Here is a 96-residue protein sequence, read N- to C-terminus: Beta-defensin 132 (96 aa).

The N-terminal stretch at 1–22 (MKFLLLVLAALRFLTQVIPASG) is a signal peptide. 3 cysteine pairs are disulfide-bonded: C27-C55, C35-C49, and C39-C56. A disordered region spans residues 74 to 96 (HWQSRRRNTQRKDKKQQTTVTSS). Residues 76 to 87 (QSRRRNTQRKDK) show a composition bias toward basic residues.

This sequence belongs to the beta-defensin family.

It localises to the secreted. Functionally, has antibacterial activity. The protein is Beta-defensin 132 (DEFB132) of Hylobates lar (Lar gibbon).